A 550-amino-acid chain; its full sequence is Chaperonin GroEL (550 aa).

Residues 30-33 (TLGP), K51, 87-91 (DGTTT), G415, and D495 contribute to the ATP site.

It belongs to the chaperonin (HSP60) family. In terms of assembly, forms a cylinder of 14 subunits composed of two heptameric rings stacked back-to-back. Interacts with the co-chaperonin GroES.

Its subcellular location is the cytoplasm. The enzyme catalyses ATP + H2O + a folded polypeptide = ADP + phosphate + an unfolded polypeptide.. Functionally, together with its co-chaperonin GroES, plays an essential role in assisting protein folding. The GroEL-GroES system forms a nano-cage that allows encapsulation of the non-native substrate proteins and provides a physical environment optimized to promote and accelerate protein folding. This is Chaperonin GroEL from Shewanella piezotolerans (strain WP3 / JCM 13877).